The primary structure comprises 274 residues: Large ribosomal subunit protein uL2 (274 aa).

Disordered regions lie at residues 28 to 53 (KPYAPLLEKNSKSGGRNNNGRITVRH) and 223 to 274 (VAMN…RRTK). The segment covering 39-48 (KSGGRNNNGR) has biased composition (low complexity). A compositionally biased stretch (basic residues) spans 254–274 (KGAKTRKNKRTDKFIVRRRTK).

The protein belongs to the universal ribosomal protein uL2 family. Part of the 50S ribosomal subunit. Forms a bridge to the 30S subunit in the 70S ribosome.

In terms of biological role, one of the primary rRNA binding proteins. Required for association of the 30S and 50S subunits to form the 70S ribosome, for tRNA binding and peptide bond formation. It has been suggested to have peptidyltransferase activity; this is somewhat controversial. Makes several contacts with the 16S rRNA in the 70S ribosome. In Pseudoalteromonas translucida (strain TAC 125), this protein is Large ribosomal subunit protein uL2.